We begin with the raw amino-acid sequence, 492 residues long: GDP-fucose protein O-fucosyltransferase 4 (492 aa).

At 1–7 (MAAGPIR) the chain is on the cytoplasmic side. Residues 8-24 (VVLVLLGVLSVCAASGH) traverse the membrane as a helical; Signal-anchor for type II membrane protein segment. Residues 25 to 492 (GSVAEREAGG…HEIFMKRQHL (468 aa)) are Lumenal-facing. N166 carries an N-linked (GlcNAc...) asparagine glycan. A disulfide bridge connects residues C389 and C392. N443 carries N-linked (GlcNAc...) asparagine glycosylation.

The protein belongs to the glycosyltransferase 10 family.

It is found in the endoplasmic reticulum membrane. It catalyses the reaction L-threonyl-[protein] + GDP-beta-L-fucose = 3-O-(alpha-L-fucosyl)-L-threonyl-[protein] + GDP + H(+). The catalysed reaction is L-seryl-[protein] + GDP-beta-L-fucose = 3-O-(alpha-L-fucosyl)-L-seryl-[protein] + GDP + H(+). The protein operates within protein modification; protein glycosylation. In terms of biological role, protein O-fucosyltransferase that specifically catalyzes O-fucosylation of serine or threonine residues in EMI domains of target proteins, such as MMRN1, MMRN2 and EMID1. Attaches fucose through an O-glycosidic linkage. O-fucosylation of EMI domain-containing proteins may be required for facilitating protein folding and secretion. Also shows minor alpha-(1,3)-fucosyltransferase activity toward activity toward biantennary N-glycan acceptors. However, this was tested with a library of synthetic substrates and this activity is unsure in vivo. In Homo sapiens (Human), this protein is GDP-fucose protein O-fucosyltransferase 4.